Reading from the N-terminus, the 262-residue chain is Phycoerythrobilin:ferredoxin oxidoreductase (262 aa).

This sequence belongs to the HY2 family.

The catalysed reaction is (3Z)-phycoerythrobilin + oxidized 2[4Fe-4S]-[ferredoxin] = 15,16-dihydrobiliverdin + reduced 2[4Fe-4S]-[ferredoxin] + 2 H(+). Catalyzes the two-electron reduction of the C2 and C3(1) diene system of 15,16-dihydrobiliverdin. The protein is Phycoerythrobilin:ferredoxin oxidoreductase (pebB) of Parasynechococcus marenigrum (strain WH8102).